The following is a 469-amino-acid chain: 3-isopropylmalate dehydratase large subunit (469 aa).

Cysteine 350, cysteine 410, and cysteine 413 together coordinate [4Fe-4S] cluster.

It belongs to the aconitase/IPM isomerase family. LeuC type 1 subfamily. As to quaternary structure, heterodimer of LeuC and LeuD. [4Fe-4S] cluster serves as cofactor.

It carries out the reaction (2R,3S)-3-isopropylmalate = (2S)-2-isopropylmalate. Its pathway is amino-acid biosynthesis; L-leucine biosynthesis; L-leucine from 3-methyl-2-oxobutanoate: step 2/4. Functionally, catalyzes the isomerization between 2-isopropylmalate and 3-isopropylmalate, via the formation of 2-isopropylmaleate. The chain is 3-isopropylmalate dehydratase large subunit from Chelativorans sp. (strain BNC1).